The chain runs to 58 residues: Small ribosomal subunit protein bS21 (58 aa).

The tract at residues 28 to 58 (VLQDIRKHEHYEKPSIKKKKKSEAARKKKRF) is disordered. Residues 31–42 (DIRKHEHYEKPS) are compositionally biased toward basic and acidic residues. Basic residues predominate over residues 43–58 (IKKKKKSEAARKKKRF).

The protein belongs to the bacterial ribosomal protein bS21 family.

This Syntrophomonas wolfei subsp. wolfei (strain DSM 2245B / Goettingen) protein is Small ribosomal subunit protein bS21.